The following is a 432-amino-acid chain: Adenylosuccinate synthetase (432 aa).

Residues 13-19 (GDEGKGK) and 41-43 (GHT) each bind GTP. The active-site Proton acceptor is the Asp14. Mg(2+) is bound by residues Asp14 and Gly41. IMP is bound by residues 14–17 (DEGK), 39–42 (NAGH), Thr130, Arg144, Gln225, Thr240, and Arg304. The active-site Proton donor is His42. A substrate-binding site is contributed by 300 to 306 (ATTGRSR). Residues Arg306, 332–334 (KLD), and 415–417 (STG) contribute to the GTP site.

Belongs to the adenylosuccinate synthetase family. Homodimer. The cofactor is Mg(2+).

The protein resides in the cytoplasm. The enzyme catalyses IMP + L-aspartate + GTP = N(6)-(1,2-dicarboxyethyl)-AMP + GDP + phosphate + 2 H(+). Its pathway is purine metabolism; AMP biosynthesis via de novo pathway; AMP from IMP: step 1/2. Plays an important role in the de novo pathway of purine nucleotide biosynthesis. Catalyzes the first committed step in the biosynthesis of AMP from IMP. The chain is Adenylosuccinate synthetase from Yersinia pseudotuberculosis serotype O:1b (strain IP 31758).